The sequence spans 232 residues: Large ribosomal subunit protein uL1 (232 aa).

It belongs to the universal ribosomal protein uL1 family. Part of the 50S ribosomal subunit.

In terms of biological role, binds directly to 23S rRNA. The L1 stalk is quite mobile in the ribosome, and is involved in E site tRNA release. Functionally, protein L1 is also a translational repressor protein, it controls the translation of the L11 operon by binding to its mRNA. This is Large ribosomal subunit protein uL1 from Parabacteroides distasonis (strain ATCC 8503 / DSM 20701 / CIP 104284 / JCM 5825 / NCTC 11152).